We begin with the raw amino-acid sequence, 625 residues long: FMRFamide-activated amiloride-sensitive sodium channel (625 aa).

Over 1–67 the chain is Cytoplasmic; it reads MKYTSAATKP…IVTSRDTKRK (67 aa). A helical membrane pass occupies residues 68–89; it reads VIWALLVIAGFTAATLQLSLLV. Topologically, residues 90–536 are extracellular; sequence RKYLQFQVVE…LADLFADIGG (447 aa). Residues Asn134, Asn196, Asn303, Asn349, Asn365, Asn372, and Asn473 are each glycosylated (N-linked (GlcNAc...) asparagine). A helical transmembrane segment spans residues 537-557; that stretch reads TLGLWMGISVLTIMELIELVI. Residues 558-625 lie on the Cytoplasmic side of the membrane; that stretch reads RLTGLVFNSE…DFRRGVESPV (68 aa). A disordered region spans residues 570–591; the sequence is LPRGPTTVNNNNGSNNHSQSTS. A compositionally biased stretch (low complexity) spans 575–591; that stretch reads TTVNNNNGSNNHSQSTS.

The protein belongs to the amiloride-sensitive sodium channel (TC 1.A.6) family. Muscle and nervous tissue.

The protein resides in the membrane. Its function is as follows. FMRFamide-gated ionotropic receptor. The protein is FMRFamide-activated amiloride-sensitive sodium channel of Cornu aspersum (Brown garden snail).